A 300-amino-acid chain; its full sequence is tRNA dimethylallyltransferase (300 aa).

ATP is bound at residue 11 to 18 (GPTAVGKS). 13-18 (TAVGKS) contributes to the substrate binding site. The segment at 35–38 (DSVQ) is interaction with substrate tRNA.

The protein belongs to the IPP transferase family. Monomer. Requires Mg(2+) as cofactor.

It catalyses the reaction adenosine(37) in tRNA + dimethylallyl diphosphate = N(6)-dimethylallyladenosine(37) in tRNA + diphosphate. Its function is as follows. Catalyzes the transfer of a dimethylallyl group onto the adenine at position 37 in tRNAs that read codons beginning with uridine, leading to the formation of N6-(dimethylallyl)adenosine (i(6)A). This is tRNA dimethylallyltransferase from Borrelia hermsii (strain HS1 / DAH).